Consider the following 468-residue polypeptide: 3-isopropylmalate dehydratase large subunit (468 aa).

[4Fe-4S] cluster-binding residues include Cys-347, Cys-408, and Cys-411.

It belongs to the aconitase/IPM isomerase family. LeuC type 1 subfamily. Heterodimer of LeuC and LeuD. The cofactor is [4Fe-4S] cluster.

The enzyme catalyses (2R,3S)-3-isopropylmalate = (2S)-2-isopropylmalate. It functions in the pathway amino-acid biosynthesis; L-leucine biosynthesis; L-leucine from 3-methyl-2-oxobutanoate: step 2/4. Functionally, catalyzes the isomerization between 2-isopropylmalate and 3-isopropylmalate, via the formation of 2-isopropylmaleate. This chain is 3-isopropylmalate dehydratase large subunit, found in Methylobacillus flagellatus (strain ATCC 51484 / DSM 6875 / VKM B-1610 / KT).